We begin with the raw amino-acid sequence, 859 residues long: Valine--tRNA ligase (859 aa).

A 'HIGH' region motif is present at residues 46–56; the sequence is PTVSGQLHIGH. Residues 583–587 carry the 'KMSKS' region motif; that stretch reads KMSKS. Lysine 586 serves as a coordination point for ATP.

This sequence belongs to the class-I aminoacyl-tRNA synthetase family. ValS type 2 subfamily. In terms of assembly, monomer.

Its subcellular location is the cytoplasm. It catalyses the reaction tRNA(Val) + L-valine + ATP = L-valyl-tRNA(Val) + AMP + diphosphate. Functionally, catalyzes the attachment of valine to tRNA(Val). As ValRS can inadvertently accommodate and process structurally similar amino acids such as threonine, to avoid such errors, it has a 'posttransfer' editing activity that hydrolyzes mischarged Thr-tRNA(Val) in a tRNA-dependent manner. The sequence is that of Valine--tRNA ligase from Rickettsia felis (strain ATCC VR-1525 / URRWXCal2) (Rickettsia azadi).